We begin with the raw amino-acid sequence, 687 residues long: Glycine--tRNA ligase beta subunit (687 aa).

The protein belongs to the class-II aminoacyl-tRNA synthetase family. In terms of assembly, tetramer of two alpha and two beta subunits.

It localises to the cytoplasm. The enzyme catalyses tRNA(Gly) + glycine + ATP = glycyl-tRNA(Gly) + AMP + diphosphate. This Geobacter sp. (strain M21) protein is Glycine--tRNA ligase beta subunit.